We begin with the raw amino-acid sequence, 121 residues long: Ribosome-binding factor A (121 aa).

It belongs to the RbfA family. In terms of assembly, monomer. Binds 30S ribosomal subunits, but not 50S ribosomal subunits or 70S ribosomes.

It localises to the cytoplasm. Functionally, one of several proteins that assist in the late maturation steps of the functional core of the 30S ribosomal subunit. Associates with free 30S ribosomal subunits (but not with 30S subunits that are part of 70S ribosomes or polysomes). Required for efficient processing of 16S rRNA. May interact with the 5'-terminal helix region of 16S rRNA. The sequence is that of Ribosome-binding factor A from Clostridium tetani (strain Massachusetts / E88).